The following is a 64-amino-acid chain: Beta-defensin 1 (64 aa).

The signal sequence occupies residues 1–22; sequence MRLHHLLLVLFFVVLSAGSGFT. Intrachain disulfides connect Cys31/Cys60, Cys38/Cys53, and Cys43/Cys61.

Belongs to the beta-defensin family. Monomer. Homodimer.

It localises to the secreted. The protein resides in the membrane. Has bactericidal activity. May act as a ligand for C-C chemokine receptor CCR6. Positively regulates the sperm motility and bactericidal activity in a CCR6-dependent manner. Binds to CCR6 and triggers Ca2+ mobilization in the sperm which is important for its motility. In Ovis aries (Sheep), this protein is Beta-defensin 1 (DEFB1).